The sequence spans 432 residues: 5'-deoxyadenosine deaminase (432 aa).

Zn(2+)-binding residues include histidine 63 and histidine 65. Residues glutamate 92 and histidine 184 each contribute to the substrate site. Histidine 211 lines the Zn(2+) pocket. Substrate contacts are provided by glutamate 214 and aspartate 299. Residue aspartate 299 participates in Zn(2+) binding.

This sequence belongs to the metallo-dependent hydrolases superfamily. MTA/SAH deaminase family. In terms of assembly, homotetramer. Zn(2+) is required as a cofactor.

The enzyme catalyses 5'-deoxyadenosine + H2O + H(+) = 5'-deoxyinosine + NH4(+). It carries out the reaction S-adenosyl-L-homocysteine + H2O + H(+) = S-inosyl-L-homocysteine + NH4(+). The catalysed reaction is S-methyl-5'-thioadenosine + H2O + H(+) = S-methyl-5'-thioinosine + NH4(+). It catalyses the reaction adenosine + H2O + H(+) = inosine + NH4(+). It participates in amino-acid biosynthesis; S-adenosyl-L-methionine biosynthesis. Catalyzes the deamination of three SAM-derived enzymatic products, namely 5'-deoxyadenosine, S-adenosyl-L-homocysteine, and 5'-methylthioadenosine, to produce the inosine analogs. Can also deaminate adenosine. The preferred substrate for this enzyme is 5'-deoxyadenosine, but all these substrates are efficiently deaminated. Likely functions in a S-adenosyl-L-methionine (SAM) recycling pathway from S-adenosyl-L-homocysteine (SAH) produced from SAM-dependent methylation reactions. May also be involved in the recycling of 5'-deoxyadenosine, whereupon the 5'-deoxyribose moiety of 5'-deoxyinosine is further metabolized to deoxyhexoses used for the biosynthesis of aromatic amino acids in methanogens. This is 5'-deoxyadenosine deaminase from Methanosarcina acetivorans (strain ATCC 35395 / DSM 2834 / JCM 12185 / C2A).